Here is a 753-residue protein sequence, read N- to C-terminus: Lysyl oxidase homolog 3 (753 aa).

The N-terminal stretch at 1–25 (MRPVSVWQWSPWGLLLCLLCSSCLG) is a signal peptide. 2 consecutive SRCR domains span residues 44–145 (FRLA…VICK) and 169–282 (VRIR…VSCV). 6 cysteine pairs are disulfide-bonded: C70–C134, C83–C144, C114–C124, C201–C271, C214–C281, and C248–C258. N-linked (GlcNAc...) asparagine glycosylation is present at N111. N-linked (GlcNAc...) asparagine glycosylation occurs at N266. A compositionally biased stretch (low complexity) spans 290–302 (SSGQKKQQQSKPQ). Positions 290–315 (SSGQKKQQQSKPQGEARVRLKGGAHP) are disordered. SRCR domains are found at residues 307-407 (VRLK…VRCN) and 417-525 (IRLS…VICS). Cystine bridges form between C332–C396, C345–C406, C376–C386, C446–C511, C459–C524, C492–C502, C554–C560, C606–C654, C638–C644, C666–C676, and C713–C727. N390 and N481 each carry an N-linked (GlcNAc...) asparagine glycan. The interval 529-732 (SDLLLHSALV…WVHNCHIGDA (204 aa)) is lysyl-oxidase like. Positions 607, 609, and 611 each coordinate Cu cation. N-linked (GlcNAc...) asparagine glycosylation occurs at N625. The lysine tyrosylquinone (Lys-Tyr) cross-link spans 634–670 (KASFCLEDTECQEDVSKRYECANFGEQGITVGCWDLY). Residue Y670 is modified to 2',4',5'-topaquinone.

The protein belongs to the lysyl oxidase family. As to quaternary structure, interacts with STAT3. Cu cation is required as a cofactor. Requires lysine tyrosylquinone residue as cofactor. Post-translationally, the lysine tyrosylquinone cross-link (LTQ) is generated by condensation of the epsilon-amino group of a lysine with a topaquinone produced by oxidation of tyrosine. In terms of tissue distribution, isoform 1: Predominantly detected in the heart, placenta, lung, and small intestine. Isoform 2: Highly detected in the kidney, pancreas, spleen, and thymus, and is absent in lung. In eye, present in all layers of corneas as well as in the limbus and conjunctiva (at protein level).

It localises to the secreted. Its subcellular location is the extracellular space. The protein localises to the cytoplasm. The protein resides in the nucleus. The enzyme catalyses L-lysyl-[protein] + O2 + H2O = (S)-2-amino-6-oxohexanoyl-[protein] + H2O2 + NH4(+). It carries out the reaction N(6)-acetyl-L-lysyl-[protein] + O2 + H2O = acetamide + (S)-2-amino-6-oxohexanoyl-[protein] + H2O2. Protein-lysine 6-oxidase that mediates the oxidation of peptidyl lysine residues to allysine in target proteins. Catalyzes the post-translational oxidative deamination of peptidyl lysine residues in precursors of elastin and different types of collagens, a prerequisite in the formation of cross-links between collagens and elastin. Required for somite boundary formation by catalyzing oxidation of fibronectin (FN1), enhancing integrin signaling in myofibers and their adhesion to the myotendinous junction (MTJ). Acts as a regulator of inflammatory response by inhibiting differentiation of naive CD4(+) T-cells into T-helper Th17 or regulatory T-cells (Treg): acts by interacting with STAT3 in the nucleus and catalyzing both deacetylation and oxidation of lysine residues on STAT3, leading to disrupt STAT3 dimerization and inhibit STAT3 transcription activity. Oxidation of lysine residues to allysine on STAT3 preferentially takes place on lysine residues that are acetylated. Also able to catalyze deacetylation of lysine residues on STAT3. Its function is as follows. Shows protein-lysine 6-oxidase activity toward elastin and different types of collagens, with the highest activity toward collagen type VIII. In terms of biological role, shows protein-lysine 6-oxidase activity toward elastin and different types of collagens, with the highest activity toward collagen type IV. This is Lysyl oxidase homolog 3 from Homo sapiens (Human).